The chain runs to 452 residues: Neuromedin-K receptor (452 aa).

The Extracellular portion of the chain corresponds to 1–71; it reads MASVPTGENW…TNQFVQPSWR (71 aa). N-linked (GlcNAc...) asparagine glycosylation is found at N9, N23, N40, and N60. Residues 72 to 94 traverse the membrane as a helical segment; that stretch reads IALWSLAYGLVVAVAVFGNLIVI. The Cytoplasmic portion of the chain corresponds to 95 to 104; it reads WIILAHKRMR. Residues 105–126 traverse the membrane as a helical segment; the sequence is TVTNYFLVNLAFSDASVAAFNT. Residues 127–146 lie on the Extracellular side of the membrane; that stretch reads LVNFIYGVHSEWYFGANYCR. A disulfide bridge connects residues C145 and C220. The chain crosses the membrane as a helical span at residues 147 to 168; that stretch reads FQNFFPITAVFASIYSMTAIAV. The Cytoplasmic segment spans residues 169–188; it reads DRYMAIIDPLKPRLSATATK. A helical membrane pass occupies residues 189-209; it reads IVIGSIWILAFLLAFPQCLYS. Topologically, residues 210–232 are extracellular; sequence KIKVMPGRTLCYVQWPEGPKQHF. A helical transmembrane segment spans residues 233–257; it reads TYHIIVIILVYCFPLLIMGVTYTIV. At 258–286 the chain is on the cytoplasmic side; the sequence is GITLWGGEIPGDTCDKYHEQLKAKRKVVK. Residues 287-308 form a helical membrane-spanning segment; it reads MMIIVVVTFAICWLPYHVYFIL. Topologically, residues 309-321 are extracellular; sequence TAIYQQLNRWKYI. Residues 322-346 form a helical membrane-spanning segment; it reads QQVYLASFWLAMSSTMYNPIIYCCL. Residues 347–452 lie on the Cytoplasmic side of the membrane; sequence NKRFRAGFKR…SPYTSVDEYS (106 aa). The S-palmitoyl cysteine moiety is linked to residue C361. The interval 401–452 is disordered; sequence DPSEGDPAKSSRKKRAVPRDPSANGCSHREFKSASTTSSFISSPYTSVDEYS. Positions 433–452 are enriched in low complexity; the sequence is SASTTSSFISSPYTSVDEYS.

This sequence belongs to the G-protein coupled receptor 1 family. In terms of processing, the anchoring of this receptor to the plasma membrane is probably mediated by the palmitoylation of a cysteine residue.

The protein localises to the cell membrane. Its function is as follows. This is a receptor for the tachykinin neuropeptide neuromedin-K (neurokinin B). It is associated with G proteins that activate a phosphatidylinositol-calcium second messenger system. This Mus musculus (Mouse) protein is Neuromedin-K receptor (Tacr3).